The sequence spans 316 residues: Ribosomal RNA small subunit methyltransferase H (316 aa).

S-adenosyl-L-methionine-binding positions include 35–37, aspartate 55, phenylalanine 79, aspartate 101, and glutamine 108; that span reads GGH.

Belongs to the methyltransferase superfamily. RsmH family.

The protein resides in the cytoplasm. The enzyme catalyses cytidine(1402) in 16S rRNA + S-adenosyl-L-methionine = N(4)-methylcytidine(1402) in 16S rRNA + S-adenosyl-L-homocysteine + H(+). Specifically methylates the N4 position of cytidine in position 1402 (C1402) of 16S rRNA. This Aliivibrio fischeri (strain ATCC 700601 / ES114) (Vibrio fischeri) protein is Ribosomal RNA small subunit methyltransferase H.